A 348-amino-acid chain; its full sequence is Delta(6)-protoilludene synthase 18 (348 aa).

4 residues coordinate Mg(2+): D87, N223, S227, and E231. The short motif at 87-91 (DEYTD) is the DDXXD motif element. Residues 223-231 (NDLVSYNRE) carry the NSE/DTE motif motif. Residues R311 and Y312 each contribute to the (2E,6E)-farnesyl diphosphate site.

It belongs to the terpene synthase family. Requires Mg(2+) as cofactor.

It catalyses the reaction (2E,6E)-farnesyl diphosphate = Delta(6)-protoilludene + diphosphate. Its function is as follows. Terpene cyclase that catalyzes the cyclization of farnesyl diphosphate (FPP) to delta(6)-protoilludene. The chain is Delta(6)-protoilludene synthase 18 from Postia placenta (strain ATCC 44394 / Madison 698-R) (Brown rot fungus).